Consider the following 378-residue polypeptide: Dual-specificity RNA methyltransferase RlmN 2 (378 aa).

Glu-113 serves as the catalytic Proton acceptor. One can recognise a Radical SAM core domain in the interval 119-355; sequence TEDRRTLCVS…AAYIRRNRGR (237 aa). An intrachain disulfide couples Cys-126 to Cys-361. The [4Fe-4S] cluster site is built by Cys-133, Cys-137, and Cys-140. S-adenosyl-L-methionine-binding positions include 188 to 189, Ser-220, 242 to 244, and Asn-318; these read GE and SLN. Catalysis depends on Cys-361, which acts as the S-methylcysteine intermediate.

It belongs to the radical SAM superfamily. RlmN family. It depends on [4Fe-4S] cluster as a cofactor.

It is found in the cytoplasm. The enzyme catalyses adenosine(2503) in 23S rRNA + 2 reduced [2Fe-2S]-[ferredoxin] + 2 S-adenosyl-L-methionine = 2-methyladenosine(2503) in 23S rRNA + 5'-deoxyadenosine + L-methionine + 2 oxidized [2Fe-2S]-[ferredoxin] + S-adenosyl-L-homocysteine. It carries out the reaction adenosine(37) in tRNA + 2 reduced [2Fe-2S]-[ferredoxin] + 2 S-adenosyl-L-methionine = 2-methyladenosine(37) in tRNA + 5'-deoxyadenosine + L-methionine + 2 oxidized [2Fe-2S]-[ferredoxin] + S-adenosyl-L-homocysteine. In terms of biological role, specifically methylates position 2 of adenine 2503 in 23S rRNA and position 2 of adenine 37 in tRNAs. m2A2503 modification seems to play a crucial role in the proofreading step occurring at the peptidyl transferase center and thus would serve to optimize ribosomal fidelity. The sequence is that of Dual-specificity RNA methyltransferase RlmN 2 from Myxococcus xanthus (strain DK1622).